A 195-amino-acid chain; its full sequence is MGSQSSKAPRGDVTAEEAAGASPAKANGQENGHVKSNGDLSPKGEGESPPVNGTDEAAGATGDAIEPAPPSQGAEAKGEVPPKETPKKKKKFSFKKPFKLSGLSFKRNRKEGGGDSSASSPTEEEQEQGEIGACSDEGTAQEGKAAATPESQEPQAKGAEASAASEEEAGPQATEPSTPSGPESGPTPASAEQNE.

The interval 1–195 (MGSQSSKAPR…PTPASAEQNE (195 aa)) is disordered. G2 carries the N-myristoyl glycine lipid modification. Phosphothreonine is present on T14. The segment covering 16–26 (EEAAGASPAKA) has biased composition (low complexity). S22, S36, S41, and S48 each carry phosphoserine. A compositionally biased stretch (low complexity) spans 53 to 64 (GTDEAAGATGDA). Phosphoserine is present on S71. A compositionally biased stretch (basic and acidic residues) spans 76 to 85 (AKGEVPPKET). T85 bears the Phosphothreonine mark. A compositionally biased stretch (basic residues) spans 86 to 98 (PKKKKKFSFKKPF). The interval 87–110 (KKKKKFSFKKPFKLSGLSFKRNRK) is effector domain involved in lipid-binding and calmodulin-binding. A phosphoserine mark is found at S93, S101, S104, S119, S120, and S135. Position 148 is a phosphothreonine (T148). 3 positions are modified to phosphoserine: S151, S162, and S165. Residues 153–195 (EPQAKGAEASAASEEEAGPQATEPSTPSGPESGPTPASAEQNE) show a composition bias toward low complexity. Phosphothreonine is present on residues T178 and T187.

It belongs to the MARCKS family. In terms of assembly, binds to filamentous actin (F-actin), but not to monomeric G-actin, independently of its phosphorylation status. Phosphorylated. Phosphorylation at Ser-120 and Thr-178 is non-redundantly catalyzed by MAPK8 in vivo. Phosphorylation at Thr-148 is preferentially catalyzed by MAPK8 in vivo, but this modification can also be catalyzed by other kinases in the absence of MAPK8. May be phosphorylated by protein kinase C, which disrupts the interaction with calmodulin.

The protein localises to the cytoplasm. It localises to the cytoskeleton. The protein resides in the cell membrane. Controls cell movement by regulating actin cytoskeleton homeostasis and filopodium and lamellipodium formation. When unphosphorylated, induces cell migration. When phosphorylated by MAPK8, induces actin bundles formation and stabilization, thereby reducing actin plasticity, hence restricting cell movement, including neuronal migration. May be involved in coupling the protein kinase C and calmodulin signal transduction systems. The sequence is that of MARCKS-related protein (MARCKSL1) from Homo sapiens (Human).